A 102-amino-acid chain; its full sequence is N(4)-acetylcytidine amidohydrolase (102 aa).

Residues threonine 6–glutamate 93 form the ASCH domain. Lysine 20 acts as the Proton acceptor in catalysis. Threonine 23 acts as the Nucleophile in catalysis. Glutamate 73 serves as the catalytic Proton donor.

Belongs to the N(4)-acetylcytidine amidohydrolase family.

It catalyses the reaction N(4)-acetylcytidine + H2O = cytidine + acetate + H(+). The enzyme catalyses N(4)-acetyl-2'-deoxycytidine + H2O = 2'-deoxycytidine + acetate + H(+). The catalysed reaction is N(4)-acetylcytosine + H2O = cytosine + acetate + H(+). Catalyzes the hydrolysis of N(4)-acetylcytidine (ac4C). The sequence is that of N(4)-acetylcytidine amidohydrolase from Serratia proteamaculans (strain 568).